We begin with the raw amino-acid sequence, 166 residues long: Putative membrane protein 162 (166 aa).

Residue M1 is a topological domain, intravirion. Residues 2–22 (YYPAVQVLIGIILVDNFNTEF) form a helical membrane-spanning segment. Over 23-166 (LSSEKKNCKT…TIMGIARNIL (144 aa)) the chain is Virion surface.

The protein belongs to the asfivirus envelope protein p22 family.

The protein localises to the virion membrane. The protein resides in the host cell membrane. This African swine fever virus (isolate Tick/Malawi/Lil 20-1/1983) (ASFV) protein is Putative membrane protein 162.